The chain runs to 477 residues: UDP-N-acetylmuramoylalanine--D-glutamate ligase (477 aa).

125 to 131 lines the ATP pocket; that stretch reads GTNGKST.

Belongs to the MurCDEF family.

The protein resides in the cytoplasm. It carries out the reaction UDP-N-acetyl-alpha-D-muramoyl-L-alanine + D-glutamate + ATP = UDP-N-acetyl-alpha-D-muramoyl-L-alanyl-D-glutamate + ADP + phosphate + H(+). The protein operates within cell wall biogenesis; peptidoglycan biosynthesis. Cell wall formation. Catalyzes the addition of glutamate to the nucleotide precursor UDP-N-acetylmuramoyl-L-alanine (UMA). The polypeptide is UDP-N-acetylmuramoylalanine--D-glutamate ligase (Rhodospirillum rubrum (strain ATCC 11170 / ATH 1.1.1 / DSM 467 / LMG 4362 / NCIMB 8255 / S1)).